Consider the following 941-residue polypeptide: Coiled-coil and C2 domain-containing protein 1A (941 aa).

Position 91 is a phosphothreonine (T91). Disordered regions lie at residues 183-248 and 301-336; these read TINE…PCSP and SRLPPPPDQLSPEPPLPAAQPVTPASTLTRPEVPQP. Positions 228 to 239 are enriched in polar residues; it reads APSTTAQTSAKP. Phosphoserine is present on S247. Residues 303 to 318 show a composition bias toward pro residues; that stretch reads LPPPPDQLSPEPPLPA. A coiled-coil region spans residues 338-384; it reads KNLLEALEQRMERYHVAAAQAKAKGDQRKARMHERIVKQYQDAIRAH. Positions 428-482 are disordered; the sequence is ANHEEGSDEEEEETPKKNTPAASTAQPKASPSRAPPSGPAPAGKAASKGTSTRAQ. S434 is modified (phosphoserine). Positions 467 to 476 are enriched in low complexity; the sequence is APAGKAASKG. Residues 475–508 are a coiled coil; it reads KGTSTRAQQQLAFLEGRKKQLLQAALRAKQKNDV. Residues 628–762 form the C2 domain; sequence RFEQRTFSVI…ETACEVHEIL (135 aa).

The protein belongs to the CC2D1 family. Strongly expressed in several brain areas including frontal cortex, cortex, mesencephalon, hippocampus, midbrain and hypothalamus. Also expressed in testis and at low levels in pituitary, liver and kidney. In brain the highest levels are detected in hippocampal pyramidal cells and raphe nuclei.

The protein resides in the cytoplasm. It is found in the nucleus. The protein localises to the cytoskeleton. Its subcellular location is the microtubule organizing center. It localises to the centrosome. In terms of biological role, transcription factor that binds specifically to the DRE (dual repressor element) and represses 5-HT1A gene transcription though this element. Mediates HDAC-independent repression of HTR1A promoter. CAMK2G inhibits CC2D1a-induced repression of the HTR1A. May play a role in the altered regulation of 5-HT1A receptors associated with anxiety and major depression. Performs essential function in controlling functional maturation of synapses. The chain is Coiled-coil and C2 domain-containing protein 1A (Cc2d1a) from Rattus norvegicus (Rat).